The primary structure comprises 448 residues: MSTAKDPGNGVYEILSLIFDFPSNEQRLWWHSTAPMFAAMLDNAGYSVHDQYRHLSIFKTHIIPFLGVYPTKGQERWLSILTRCGLPLELSLNCTDSVVRYAYEPINEMTGTEKDPSNTLPIIGSVQKLAQIQAGIDLEWFSYFKDELTLDESESAILQDTELVKEQIKTQNKLALDLKESQFALKVYFYPHLKSIATGNSTHFLIFDSVFKLSQKHDSIQPAFQALCDYVSRRNDSSEVDQHRALHARLLSCDLIDPAKSRVKIYLQEQTVSLPAMEDLWTLGGRRVDASTMDGLDMLRELWSLLKVPTGHLEYPKGYMELGEIPNEQLPSLVNYTLHRNDPMPEPQVYFTVFGMNDAEISNALTIFLQRHGFADMAKKYRVFLQDSYPYHDFESLNYLHSLVSFSYRRNKPYLSVYLHTFETGRWPVVADSPISFDAYRRCDLSTK.

L-tryptophan-binding positions include 80 to 81 (IL) and Glu89. Substrate-binding residues include Arg100, Lys186, and Tyr188. Residues Tyr190 and Arg249 each contribute to the L-tryptophan site. Residues Arg262, Lys264, Tyr266, Gln348, Tyr350, Tyr414, and Tyr418 each contribute to the substrate site.

This sequence belongs to the tryptophan dimethylallyltransferase family. As to quaternary structure, homodimer.

It catalyses the reaction L-tryptophan + dimethylallyl diphosphate = 4-(3-methylbut-2-enyl)-L-tryptophan + diphosphate. It functions in the pathway alkaloid biosynthesis; ergot alkaloid biosynthesis. Functionally, catalyzes the first step of ergot alkaloid biosynthesis. Ergot alkaloids, which are produced by endophyte fungi, can enhance plant host fitness, but also cause livestock toxicosis to host plants. This is Tryptophan dimethylallyltransferase 2 (dmaW2) from Claviceps purpurea (strain 20.1) (Ergot fungus).